The sequence spans 314 residues: Transcription factor TCP20 (314 aa).

2 disordered regions span residues 1–91 (MDPK…RGRR) and 295–314 (NHEEHQQESGEKDDSQGSGR). Basic and acidic residues-rich tracts occupy residues 38–49 (DENRKPTTEIKD) and 77–89 (SNKDRHTKVEGRG). The 55-residue stretch at 78–132 (NKDRHTKVEGRGRRIRMPALCAARIFQLTRELGHKSDGETIQWLLQQAEPSIIAA) folds into the TCP domain.

As to quaternary structure, interacts with PURA1. Interacts with SPL.

It is found in the nucleus. In terms of biological role, transcription factor that binds to the site II motif (3'-TGGGCC/T-5') in the promoter of PCNA-2 and to 3'-GCCCG/A-5' elements in the promoters of cyclin CYCB1-1 and ribosomal protein genes. The sequence is that of Transcription factor TCP20 (TCP20) from Arabidopsis thaliana (Mouse-ear cress).